A 713-amino-acid polypeptide reads, in one-letter code: Probable tRNA (uracil-O(2)-)-methyltransferase (713 aa).

Disordered regions lie at residues 49 to 92 and 480 to 508; these read TLRS…REGT and LHSRQGHPQSRPGGAHAPSAPQTAAHDAG. Ser-76 carries the phosphoserine modification. A compositionally biased stretch (basic and acidic residues) spans 79-89; sequence GEPESGPRASR. Ser-489 bears the Phosphoserine mark. A C3H1-type zinc finger spans residues 669–698; that stretch reads FKTRICWFFAHHPDGCVLPAAQCPFAHGPE.

Belongs to the TRM44 family.

The protein resides in the cytoplasm. The catalysed reaction is uridine(44) in tRNA(Ser) + S-adenosyl-L-methionine = 2'-O-methyluridine(44) in tRNA(Ser) + S-adenosyl-L-homocysteine + H(+). Its function is as follows. Probable adenosyl-L-methionine (AdoMet)-dependent tRNA (uracil-O(2)-)-methyltransferase. This chain is Probable tRNA (uracil-O(2)-)-methyltransferase (Trmt44), found in Mus musculus (Mouse).